A 125-amino-acid polypeptide reads, in one-letter code: Small ribosomal subunit protein uS13 (125 aa).

The disordered stretch occupies residues 99–125 (RGQRTKTNARTRKGKRKTVANKKMAAK).

Belongs to the universal ribosomal protein uS13 family. As to quaternary structure, part of the 30S ribosomal subunit. Forms a loose heterodimer with protein S19. Forms two bridges to the 50S subunit in the 70S ribosome.

In terms of biological role, located at the top of the head of the 30S subunit, it contacts several helices of the 16S rRNA. In the 70S ribosome it contacts the 23S rRNA (bridge B1a) and protein L5 of the 50S subunit (bridge B1b), connecting the 2 subunits; these bridges are implicated in subunit movement. Contacts the tRNAs in the A and P-sites. This is Small ribosomal subunit protein uS13 from Borrelia turicatae (strain 91E135).